A 37-amino-acid chain; its full sequence is Cytochrome b6-f complex subunit 5 (37 aa).

Residues 5-25 (LLFGIVLGLIPVTLVGLFVAA) traverse the membrane as a helical segment.

It belongs to the PetG family. In terms of assembly, the 4 large subunits of the cytochrome b6-f complex are cytochrome b6, subunit IV (17 kDa polypeptide, PetD), cytochrome f and the Rieske protein, while the 4 small subunits are PetG, PetL, PetM and PetN. The complex functions as a dimer.

The protein resides in the plastid. It localises to the chloroplast thylakoid membrane. Functionally, component of the cytochrome b6-f complex, which mediates electron transfer between photosystem II (PSII) and photosystem I (PSI), cyclic electron flow around PSI, and state transitions. PetG is required for either the stability or assembly of the cytochrome b6-f complex. This is Cytochrome b6-f complex subunit 5 from Rhodomonas salina (Cryptomonas salina).